Consider the following 70-residue polypeptide: U-scutigerotoxin(02)-Tl1a (70 aa).

Positions 1-17 (MKYILLGLLLMVVLANA) are cleaved as a signal peptide.

This sequence belongs to the scutigerotoxin-02 family. In terms of processing, contains 4 disulfide bonds. In terms of tissue distribution, expressed by the venom gland.

Its subcellular location is the secreted. The chain is U-scutigerotoxin(02)-Tl1a from Thereuopoda longicornis (Long-legged centipede).